A 415-amino-acid polypeptide reads, in one-letter code: Glycerate 2-kinase (415 aa).

Lys-57 contributes to the substrate binding site.

The protein belongs to the glycerate kinase type-1 family. In terms of assembly, homodimer. The cofactor is Mg(2+). It depends on Ni(2+) as a cofactor. Requires Mn(2+) as cofactor. Co(2+) serves as cofactor.

It catalyses the reaction (R)-glycerate + ATP = (2R)-2-phosphoglycerate + ADP + H(+). Functionally, catalyzes the ATP-dependent phosphorylation of D-glycerate to 2-phosphoglycerate. It can also partially utilize GTP, CTP or UTP as phosphate donor. In Picrophilus torridus (strain ATCC 700027 / DSM 9790 / JCM 10055 / NBRC 100828 / KAW 2/3), this protein is Glycerate 2-kinase (gck).